Reading from the N-terminus, the 320-residue chain is Cytochrome f (320 aa).

Residues 1–35 (MQTRKTLSWIKEEITRSISLSLMLSIITHASLSNA) form the signal peptide. 4 residues coordinate heme: Y36, C56, C59, and H60. A helical transmembrane segment spans residues 286–306 (VQGLLFFLTSVLLAQIFLVLK).

It belongs to the cytochrome f family. As to quaternary structure, the 4 large subunits of the cytochrome b6-f complex are cytochrome b6, subunit IV (17 kDa polypeptide, petD), cytochrome f and the Rieske protein, while the 4 small subunits are PetG, PetL, PetM and PetN. The complex functions as a dimer. Requires heme as cofactor.

Its subcellular location is the plastid. The protein localises to the chloroplast thylakoid membrane. Component of the cytochrome b6-f complex, which mediates electron transfer between photosystem II (PSII) and photosystem I (PSI), cyclic electron flow around PSI, and state transitions. This is Cytochrome f from Pelargonium hortorum (Common geranium).